The sequence spans 60 residues: UPF0434 protein PC1_1771 (60 aa).

This sequence belongs to the UPF0434 family.

The protein is UPF0434 protein PC1_1771 of Pectobacterium carotovorum subsp. carotovorum (strain PC1).